The following is a 392-amino-acid chain: 2-oxoisovalerate dehydrogenase subunit beta, mitochondrial (392 aa).

The transit peptide at M1–Q50 directs the protein to the mitochondrion. Position 152 (Y152) interacts with thiamine diphosphate. The K(+) site is built by G178, L180, T181, C228, and D231. An N6-acetyllysine modification is found at K232. N233 provides a ligand contact to K(+). The residue at position 241 (K241) is an N6-acetyllysine.

Heterotetramer of 2 alpha/BCKDHA and 2 beta chains/BCKDHB that forms the branched-chain alpha-keto acid decarboxylase (E1) component of the BCKD complex. The branched-chain alpha-ketoacid dehydrogenase is a large complex composed of three major building blocks E1, E2 and E3. It is organized around E2, a 24-meric cubic core composed of DBT, to which are associated 6 to 12 copies of E1, and approximately 6 copies of the dehydrogenase E3, a DLD dimer. The cofactor is thiamine diphosphate.

It localises to the mitochondrion matrix. The catalysed reaction is N(6)-[(R)-lipoyl]-L-lysyl-[protein] + 3-methyl-2-oxobutanoate + H(+) = N(6)-[(R)-S(8)-2-methylpropanoyldihydrolipoyl]-L-lysyl-[protein] + CO2. Its function is as follows. Together with BCKDHA forms the heterotetrameric E1 subunit of the mitochondrial branched-chain alpha-ketoacid dehydrogenase (BCKD) complex. The BCKD complex catalyzes the multi-step oxidative decarboxylation of alpha-ketoacids derived from the branched-chain amino-acids valine, leucine and isoleucine producing CO2 and acyl-CoA which is subsequently utilized to produce energy. The E1 subunit catalyzes the first step with the decarboxylation of the alpha-ketoacid forming an enzyme-product intermediate. A reductive acylation mediated by the lipoylamide cofactor of E2 extracts the acyl group from the E1 active site for the next step of the reaction. The protein is 2-oxoisovalerate dehydrogenase subunit beta, mitochondrial (BCKDHB) of Bos taurus (Bovine).